A 34-amino-acid chain; its full sequence is Voltage sensor toxin 3 (34 aa).

3 disulfide bridges follow: Cys-2–Cys-17, Cys-9–Cys-22, and Cys-16–Cys-29.

The protein belongs to the neurotoxin 10 (Hwtx-1) family. 61 (VSTX3) subfamily. Expressed by the venom gland.

It is found in the secreted. Functionally, potent voltage-gated sodium channel blocker (IC(50)=190 nM and 210 nM on human and rat Nav1.3/SCN3A respectively, 430 nM on human Nav1.7/SCN9A, 770 nM and 290 nM on human and rat Nav1.8/SCN10A, respectively). Binds the voltage-sensor domain of the potassium channel KvAP (from Aeropyrum pernix) and weakly inhibits this channel. This Grammostola rosea (Chilean rose tarantula) protein is Voltage sensor toxin 3.